The sequence spans 110 residues: Evasin P1166 (110 aa).

Residues 1-24 form the signal peptide; the sequence is MEVKIFTLLQIALFIALGIHLVVA. Cystine bridges form between Cys-45–Cys-67, Cys-49–Cys-69, and Cys-60–Cys-80. An N-linked (GlcNAc...) asparagine glycan is attached at Asn-48. The segment at 89-110 is disordered; sequence SEYPNPKSSEIDAAAPLPRETH.

The protein resides in the secreted. In terms of biological role, salivary chemokine-binding protein which binds to host chemokines CXCL1, CXCL2 and CXCL8. This is Evasin P1166 from Ixodes ricinus (Common tick).